A 357-amino-acid chain; its full sequence is DNA replication and repair protein RecF (357 aa).

G30–T37 contacts ATP.

It belongs to the RecF family.

The protein localises to the cytoplasm. The RecF protein is involved in DNA metabolism; it is required for DNA replication and normal SOS inducibility. RecF binds preferentially to single-stranded, linear DNA. It also seems to bind ATP. The sequence is that of DNA replication and repair protein RecF from Shigella flexneri serotype 5b (strain 8401).